The following is a 180-amino-acid chain: Oligoribonuclease (180 aa).

In terms of domain architecture, Exonuclease spans 7–170; it reads LIWIDLEMTG…DDIRESIAEL (164 aa). Tyr-128 is a catalytic residue.

This sequence belongs to the oligoribonuclease family.

Its subcellular location is the cytoplasm. Its function is as follows. 3'-to-5' exoribonuclease specific for small oligoribonucleotides. This chain is Oligoribonuclease, found in Pseudomonas putida (strain ATCC 700007 / DSM 6899 / JCM 31910 / BCRC 17059 / LMG 24140 / F1).